The following is a 393-amino-acid chain: Dual specificity mitogen-activated protein kinase kinase 1 (393 aa).

Residues 1 to 27 are disordered; the sequence is MPKKKPTPIQLNPAPDGSAVNGTSSAE. In terms of domain architecture, Protein kinase spans 68–361; it reads FEKISELGAG…LKQLMVHAFI (294 aa). ATP contacts are provided by residues 74–82 and Lys97; that span reads LGAGNGGVV. Asp190 functions as the Proton acceptor in the catalytic mechanism. Residues Ser218 and Ser222 each carry the phosphoserine; by RAF modification. The segment at 270–307 is RAF1-binding; it reads ELELLFGCQVEGDAAETPPRPRTPGRPLSSYGMDSRPP. Position 286 is a phosphothreonine (Thr286). A Phosphothreonine; by MAPK1 modification is found at Thr292. Ser298 carries the phosphoserine; by PAK modification.

It belongs to the protein kinase superfamily. STE Ser/Thr protein kinase family. MAP kinase kinase subfamily. As to quaternary structure, found in a complex with at least BRAF, HRAS, MAP2K1, MAPK3/ERK1 and RGS14. Forms a heterodimer with MAP2K2/MEK2. Forms heterodimers with KSR2 which further dimerize to form tetramers. Interacts with KSR1 or KSR2 and BRAF; the interaction with KSR1 or KSR2 mediates KSR1-BRAF or KSR2-BRAF dimerization. Interacts with ARBB2, LAMTOR3, MAPK1/ERK2 and RAF1. Interacts with MAPK1/ERK2. Interacts with MORG1. Interacts with PPARG. Interacts with VRK2. Interacts with SGK1. Interacts with BIRC6/bruce. Interacts with KAT7; the interaction promotes KAT7 phosphorylation. Interacts with RAF1 and NEK10; the interaction is required for ERK1/2-signaling pathway activation in response to UV irradiation. Interacts with TRAF3IP3. Interacts with MOS. Post-translationally, phosphorylation at Ser-218 and Ser-222 by MAP kinase kinase kinases (BRAF or MEKK1) positively regulates kinase activity. Also phosphorylated at Thr-292 by MAPK1/ERK2 and at Ser-298 by PAK. MAPK1/ERK2 phosphorylation of Thr-292 occurs in response to cellular adhesion and leads to inhibition of Ser-298 phosphorylation by PAK. Autophosphorylated at Ser-218 and Ser-222, autophosphosphorylation is promoted by NEK10 following UV irradiation.

Its subcellular location is the cytoplasm. It is found in the cytoskeleton. The protein resides in the microtubule organizing center. It localises to the centrosome. The protein localises to the spindle pole body. Its subcellular location is the nucleus. It is found in the membrane. The enzyme catalyses L-seryl-[protein] + ATP = O-phospho-L-seryl-[protein] + ADP + H(+). It catalyses the reaction L-threonyl-[protein] + ATP = O-phospho-L-threonyl-[protein] + ADP + H(+). The catalysed reaction is L-tyrosyl-[protein] + ATP = O-phospho-L-tyrosyl-[protein] + ADP + H(+). Its activity is regulated as follows. Ras proteins such as HRAS mediate the activation of RAF proteins such as RAF1 or BRAF which in turn activate extracellular signal-regulated kinases (ERK) through MAPK (mitogen-activated protein kinases) and ERK kinases MAP2K1/MEK1 and MAP2K2/MEK2. Activation occurs through phosphorylation of Ser-218 and Ser-222. MAP2K1/MEK1 binds KSR1 or KSR2 releasing the inhibitory intramolecular interaction between KSR1 or KSR2 protein kinase and N-terminal domains. This allows KSR1 or KSR2 dimerization with BRAF leading to BRAF activation and phosphorylation of MAP2K1. MAP2K1/MEK1 is also the target of negative feed-back regulation by its substrate kinases, such as MAPK1/ERK2. These phosphorylate MAP2K1/MEK1 on Thr-292, thereby facilitating dephosphorylation of the activating residues Ser-218 and Ser-222. Inhibited by serine/threonine phosphatase 2A. Its function is as follows. Dual specificity protein kinase which acts as an essential component of the MAP kinase signal transduction pathway. Binding of extracellular ligands such as growth factors, cytokines and hormones to their cell-surface receptors activates RAS and this initiates RAF1 activation. RAF1 then further activates the dual-specificity protein kinases MAP2K1/MEK1 and MAP2K2/MEK2. Both MAP2K1/MEK1 and MAP2K2/MEK2 function specifically in the MAPK/ERK cascade, and catalyze the concomitant phosphorylation of a threonine and a tyrosine residue in a Thr-Glu-Tyr sequence located in the extracellular signal-regulated kinases MAPK3/ERK1 and MAPK1/ERK2, leading to their activation and further transduction of the signal within the MAPK/ERK cascade. Activates BRAF in a KSR1 or KSR2-dependent manner; by binding to KSR1 or KSR2 releases the inhibitory intramolecular interaction between KSR1 or KSR2 protein kinase and N-terminal domains which promotes KSR1 or KSR2-BRAF dimerization and BRAF activation. Depending on the cellular context, this pathway mediates diverse biological functions such as cell growth, adhesion, survival and differentiation, predominantly through the regulation of transcription, metabolism and cytoskeletal rearrangements. One target of the MAPK/ERK cascade is peroxisome proliferator-activated receptor gamma (PPARG), a nuclear receptor that promotes differentiation and apoptosis. MAP2K1/MEK1 has been shown to export PPARG from the nucleus. The MAPK/ERK cascade is also involved in the regulation of endosomal dynamics, including lysosome processing and endosome cycling through the perinuclear recycling compartment (PNRC), as well as in the fragmentation of the Golgi apparatus during mitosis. This is Dual specificity mitogen-activated protein kinase kinase 1 from Rattus norvegicus (Rat).